The sequence spans 273 residues: Formamidopyrimidine-DNA glycosylase (273 aa).

The active-site Schiff-base intermediate with DNA is proline 2. The active-site Proton donor is glutamate 3. Lysine 60 serves as the catalytic Proton donor; for beta-elimination activity. The DNA site is built by histidine 94, arginine 113, and arginine 154. An FPG-type zinc finger spans residues 239–273; the sequence is NAYDREGQPCPRCGATIIKTVVAQRGTHYCPECQR. Arginine 263 functions as the Proton donor; for delta-elimination activity in the catalytic mechanism.

Belongs to the FPG family. As to quaternary structure, monomer. Requires Zn(2+) as cofactor.

It catalyses the reaction Hydrolysis of DNA containing ring-opened 7-methylguanine residues, releasing 2,6-diamino-4-hydroxy-5-(N-methyl)formamidopyrimidine.. The enzyme catalyses 2'-deoxyribonucleotide-(2'-deoxyribose 5'-phosphate)-2'-deoxyribonucleotide-DNA = a 3'-end 2'-deoxyribonucleotide-(2,3-dehydro-2,3-deoxyribose 5'-phosphate)-DNA + a 5'-end 5'-phospho-2'-deoxyribonucleoside-DNA + H(+). Functionally, involved in base excision repair of DNA damaged by oxidation or by mutagenic agents. Acts as a DNA glycosylase that recognizes and removes damaged bases. Has a preference for oxidized purines, such as 7,8-dihydro-8-oxoguanine (8-oxoG). Has AP (apurinic/apyrimidinic) lyase activity and introduces nicks in the DNA strand. Cleaves the DNA backbone by beta-delta elimination to generate a single-strand break at the site of the removed base with both 3'- and 5'-phosphates. This chain is Formamidopyrimidine-DNA glycosylase, found in Roseiflexus sp. (strain RS-1).